The following is a 967-amino-acid chain: Probable helicase DDB_G0274399 (967 aa).

A disordered region spans residues 161–192 (EMTDDEDTAPTSAATHVGAPTKSTTTTTTTTT). ATP is bound at residue 357 to 364 (GPPGTGKT). Disordered stretches follow at residues 529–553 (SAIP…QDTS) and 892–967 (QKQK…RTRR). The stretch at 890–949 (NLQKQKDIEKRKKQHKRQKQKSKENDKKKQLKKRKELNNNDNNNNNKESSNKEVQEITNA) forms a coiled coil. The segment covering 900–909 (RKKQHKRQKQ) has biased composition (basic residues). A compositionally biased stretch (low complexity) spans 928–937 (NNDNNNNNKE).

The protein belongs to the DNA2/NAM7 helicase family.

It is found in the nucleus. The sequence is that of Probable helicase DDB_G0274399 from Dictyostelium discoideum (Social amoeba).